The chain runs to 207 residues: Large ribosomal subunit protein uL4 (207 aa).

The segment at 44-78 (MRQGTHKTKNRAEVSGGGRKPWRQKGTGRARQGSI) is disordered.

Belongs to the universal ribosomal protein uL4 family. As to quaternary structure, part of the 50S ribosomal subunit.

Its function is as follows. One of the primary rRNA binding proteins, this protein initially binds near the 5'-end of the 23S rRNA. It is important during the early stages of 50S assembly. It makes multiple contacts with different domains of the 23S rRNA in the assembled 50S subunit and ribosome. In terms of biological role, forms part of the polypeptide exit tunnel. The polypeptide is Large ribosomal subunit protein uL4 (Geobacillus kaustophilus (strain HTA426)).